We begin with the raw amino-acid sequence, 258 residues long: Imidazole glycerol phosphate synthase subunit HisF (258 aa).

Active-site residues include Asp-11 and Asp-130.

The protein belongs to the HisA/HisF family. Heterodimer of HisH and HisF.

The protein resides in the cytoplasm. It catalyses the reaction 5-[(5-phospho-1-deoxy-D-ribulos-1-ylimino)methylamino]-1-(5-phospho-beta-D-ribosyl)imidazole-4-carboxamide + L-glutamine = D-erythro-1-(imidazol-4-yl)glycerol 3-phosphate + 5-amino-1-(5-phospho-beta-D-ribosyl)imidazole-4-carboxamide + L-glutamate + H(+). The protein operates within amino-acid biosynthesis; L-histidine biosynthesis; L-histidine from 5-phospho-alpha-D-ribose 1-diphosphate: step 5/9. Its function is as follows. IGPS catalyzes the conversion of PRFAR and glutamine to IGP, AICAR and glutamate. The HisF subunit catalyzes the cyclization activity that produces IGP and AICAR from PRFAR using the ammonia provided by the HisH subunit. The polypeptide is Imidazole glycerol phosphate synthase subunit HisF (Salmonella arizonae (strain ATCC BAA-731 / CDC346-86 / RSK2980)).